Consider the following 376-residue polypeptide: Rhodopsin (376 aa).

Topologically, residues 1–51 are extracellular; sequence MSLINEPSYSAYSWGGQGGYGNQTVVDKVLPEMLHLIDPHWYQFPPMNPLW. A glycan (N-linked (GlcNAc...) asparagine) is linked at Asn-22. The chain crosses the membrane as a helical span at residues 52 to 76; sequence HGLLGFVIGCLGFVSVVGNGMVIYI. Over 77-88 the chain is Cytoplasmic; that stretch reads FSTTKGLRTPSN. A helical transmembrane segment spans residues 89–113; the sequence is LLVVNLAFSDFLMMLSMSPPMVINC. Topologically, residues 114–128 are extracellular; that stretch reads YYETWVLGPFMCELY. Cys-125 and Cys-202 are disulfide-bonded. Residues 129 to 148 traverse the membrane as a helical segment; the sequence is ALLGSLFGCGSIWTMVMIAL. Residues 149–167 are Cytoplasmic-facing; the sequence is DRYNVIVKGLAAKPMTNKT. Residues 168–191 traverse the membrane as a helical segment; that stretch reads AMLRILGIWAMSIAWTVFPLFGWN. At 192–215 the chain is on the extracellular side; that stretch reads RYVPEGNMTACGTDYLNKEWVSRS. Residue Asn-198 is glycosylated (N-linked (GlcNAc...) asparagine). A helical membrane pass occupies residues 216–243; it reads YILVYSVFVYFLPLATIIYSYWFIVQAV. The Cytoplasmic segment spans residues 244–278; the sequence is SAHEKQMREQAKKMNVASLRSAENANTSAECKLAK. Residues 279 to 302 form a helical membrane-spanning segment; it reads VALMTISLWFFAWTPYLVTDFSGI. At 303–309 the chain is on the extracellular side; the sequence is FEWGKIS. The helical transmembrane segment at 310 to 334 threads the bilayer; that stretch reads PLATIWCSLFAKANAVYNPIVYGIS. Lys-321 is modified (N6-(retinylidene)lysine). Topologically, residues 335 to 376 are cytoplasmic; that stretch reads HPKYRAALNKKFPSLACASEPDDTASQASGATTVSDEKSASA. The interval 353-376 is disordered; sequence SEPDDTASQASGATTVSDEKSASA. Polar residues predominate over residues 358–368; that stretch reads TASQASGATTV.

The protein belongs to the G-protein coupled receptor 1 family. Opsin subfamily. In terms of processing, phosphorylated on some or all of the serine and threonine residues present in the C-terminal region.

It localises to the membrane. Visual pigments are the light-absorbing molecules that mediate vision. They consist of an apoprotein, opsin, covalently linked to cis-retinal. The sequence is that of Rhodopsin from Sphodromantis sp. (Mantis).